A 1201-amino-acid chain; its full sequence is Coatomer subunit alpha (1201 aa).

WD repeat units lie at residues 9–39 (SKSTRAKGIAFHPSRPWVLVALFSSTIQLWD), 51–81 (DHEGPVRGLDFHPTQPIFVSAGDDYTIKVWS), 93–123 (GHLDYVRTVFFHRELPWIISASDDQTIRIWN), 135–165 (GHNHFVMCAQFHPTDDLIVSASLDETIRIWD), 207–237 (GHTRGVNWASFHPTLPLIVSGSDDRQVKLWR), and 251–281 (GHTNNVDSVIFHPHQNLIISVGEDKTLRVWD). The segment at 842–862 (AVNTTQEQEEPLGEENFNDED) is disordered. The segment covering 848-862 (EQEEPLGEENFNDED) has biased composition (acidic residues).

In terms of assembly, oligomeric complex that consists of at least the alpha, beta, beta', gamma, delta, epsilon and zeta subunits. Interacts with the ESCRT-0 subunit VPS27. Interacts with KEI1 (via C-terminal region).

The protein localises to the cytoplasm. The protein resides in the golgi apparatus membrane. It localises to the cytoplasmic vesicle. Its subcellular location is the COPI-coated vesicle membrane. The coatomer is a cytosolic protein complex that binds to dilysine motifs and reversibly associates with Golgi non-clathrin-coated vesicles, which further mediate biosynthetic protein transport from the ER, via the Golgi up to the trans Golgi network. Coatomer complex is required for budding from Golgi membranes, and is essential for the retrograde Golgi-to-ER transport of dilysine-tagged proteins. In Saccharomyces cerevisiae (strain ATCC 204508 / S288c) (Baker's yeast), this protein is Coatomer subunit alpha (COP1).